The following is a 356-amino-acid chain: Transcription factor ATOH1 (356 aa).

Over residues 1–21 (MSRLLHAEEWAEVKELGDHHR) the composition is skewed to basic and acidic residues. Disordered regions lie at residues 1 to 56 (MSRL…PELS) and 92 to 125 (SEAA…GPVK). Over residues 26–40 (HHLPQPPPPPPPQPP) the composition is skewed to pro residues. Residues 96-109 (APRDEVDGRGELVR) show a composition bias toward basic and acidic residues. The span at 110 to 124 (RSSGGASSSKSPGPV) shows a compositional bias: low complexity. One can recognise a bHLH domain in the interval 161–213 (QRRLAANARERRRMHGLNHAFDQLRNVIPSFNNDKKLSKYETLQMAQIYINAL). 2 disordered regions span residues 218 to 279 (QTPS…TRFS) and 314 to 356 (SPSL…DEAS). A compositionally biased stretch (low complexity) spans 252-266 (NATAAGAQQASGGSQ). Positions 337–356 (HRSDGEFSPHSHYSDSDEAS) are enriched in basic and acidic residues.

As to quaternary structure, efficient DNA binding requires dimerization with another bHLH protein.

Its subcellular location is the nucleus. Its function is as follows. Transcriptional regulator. Activates E box-dependent transcription in collaboration with TCF3/E47, but the activity is completely antagonized by the negative regulator of neurogenesis HES1. Plays a role in the differentiation of subsets of neural cells by activating E box-dependent transcription. The polypeptide is Transcription factor ATOH1 (Pan troglodytes (Chimpanzee)).